A 116-amino-acid polypeptide reads, in one-letter code: NADH-ubiquinone oxidoreductase chain 3 (116 aa).

Helical transmembrane passes span 3 to 23, 56 to 76, and 85 to 105; these read LILA…MIAF, FFLV…LLPL, and PTLA…GLIH.

The protein belongs to the complex I subunit 3 family.

The protein resides in the mitochondrion membrane. It catalyses the reaction a ubiquinone + NADH + 5 H(+)(in) = a ubiquinol + NAD(+) + 4 H(+)(out). Core subunit of the mitochondrial membrane respiratory chain NADH dehydrogenase (Complex I) that is believed to belong to the minimal assembly required for catalysis. Complex I functions in the transfer of electrons from NADH to the respiratory chain. The immediate electron acceptor for the enzyme is believed to be ubiquinone. This chain is NADH-ubiquinone oxidoreductase chain 3 (MT-ND3), found in Latimeria chalumnae (Coelacanth).